The chain runs to 489 residues: Glycogen synthase (489 aa).

Lys-17 provides a ligand contact to ADP-alpha-D-glucose.

This sequence belongs to the glycosyltransferase 1 family. Bacterial/plant glycogen synthase subfamily.

It catalyses the reaction [(1-&gt;4)-alpha-D-glucosyl](n) + ADP-alpha-D-glucose = [(1-&gt;4)-alpha-D-glucosyl](n+1) + ADP + H(+). Its pathway is glycan biosynthesis; glycogen biosynthesis. Synthesizes alpha-1,4-glucan chains using ADP-glucose. This is Glycogen synthase from Nitratidesulfovibrio vulgaris (strain ATCC 29579 / DSM 644 / CCUG 34227 / NCIMB 8303 / VKM B-1760 / Hildenborough) (Desulfovibrio vulgaris).